Consider the following 592-residue polypeptide: Polyadenylate-binding protein, cytoplasmic and nuclear (592 aa).

Basic and acidic residues predominate over residues 1–10; that stretch reads MSDITEKTAE. A disordered region spans residues 1-43; the sequence is MSDITEKTAEQLENLQINDDQQPAQSASAPSTSASESEASSVS. Positions 11-20 are enriched in polar residues; sequence QLENLQINDD. Residues 21–43 are compositionally biased toward low complexity; the sequence is QQPAQSASAPSTSASESEASSVS. RRM domains are found at residues 50–128, 138–215, 231–308, and 334–411; these read ASLY…WSER, GNIF…MHVP, TNIY…RAQK, and VNLF…IAQR. A PABC domain is found at 507 to 586; that stretch reads NQFPRHQQQH…ALAAYENFKK (80 aa).

The protein belongs to the polyadenylate-binding protein type-1 family.

It localises to the cytoplasm. The protein localises to the nucleus. In terms of biological role, binds the poly(A) tail of mRNA. Appears to be an important mediator of the multiple roles of the poly(A) tail in mRNA biogenesis, stability and translation. In the nucleus, involved in both mRNA cleavage and polyadenylation. Is also required for efficient mRNA export to the cytoplasm. Acts in concert with a poly(A)-specific nuclease (PAN) to affect poly(A) tail shortening, which may occur concomitantly with either nucleocytoplasmic mRNA transport or translational initiation. In the cytoplasm, stimulates translation initiation and regulates mRNA decay through translation termination-coupled poly(A) shortening, probably mediated by PAN. This is Polyadenylate-binding protein, cytoplasmic and nuclear (PAB1) from Kluyveromyces lactis (strain ATCC 8585 / CBS 2359 / DSM 70799 / NBRC 1267 / NRRL Y-1140 / WM37) (Yeast).